A 632-amino-acid chain; its full sequence is tRNA endonuclease VMS1 (632 aa).

Residues 72 to 96 (MRCSVCQMSFDSRNEQKAHYQTDYH) form a C2H2-type zinc finger. Residues 123–155 (HGIKSEDENSGGEQTSSDHEESEEASDRDPDLQ) are disordered. Residues 232-392 (PMAISALFMV…KKAWCELSYL (161 aa)) form the VLRF1 domain. The active site involves glutamine 295. ANK repeat units lie at residues 470 to 500 (LTPTMLHYASQQGMKQMALILLSNIKCDPTI) and 504 to 530 (LGRTAWDLNRNDDVRHAFQIARYNLGE). Coiled coils occupy residues 544–582 (LSREQVDEINEKKKAIENEKAEKLIKLELEAAKEKQRFA) and 608–632 (TDEQRRRLMREQRARAAEERMKKKY). Residues 578–589 (KQRFAKDAERGP) are compositionally biased toward basic and acidic residues. Residues 578–632 (KQRFAKDAERGPGKKLTNIPSIQQQNLNSLTDEQRRRLMREQRARAAEERMKKKY) form a disordered region. The span at 595–608 (NIPSIQQQNLNSLT) shows a compositional bias: polar residues. The segment covering 609–632 (DEQRRRLMREQRARAAEERMKKKY) has biased composition (basic and acidic residues).

The protein belongs to the ANKZF1/VMS1 family. Associates with 60S ribosomal subunit. Interacts with CDC48. Interacts with NPL4.

It localises to the cytoplasm. The protein resides in the mitochondrion. Its subcellular location is the endoplasmic reticulum membrane. Endonuclease that cleaves polypeptidyl-tRNAs downstream of the ribosome-associated quality control (RQC) pathway to release incompletely synthesized polypeptides for degradation. The RQC pathway disassembles aberrantly stalled translation complexes to recycle or degrade the constituent parts. VMS1 acts downstream disassembly of stalled ribosomes and specifically cleaves off the terminal 3'-CCA nucleotides universal to all tRNAs from polypeptidyl-tRNAs, releasing (1) ubiquitinated polypeptides from 60S ribosomal subunit for degradation by the ERAD pathway and (2) cleaved tRNAs for recycling. Component of an evolutionarily conserved system for ubiquitin-mediated mitochondria-associated protein degradation (MAD), which is necessary to maintain mitochondrial, cellular, and organismal viability. This is tRNA endonuclease VMS1 from Saccharomyces cerevisiae (strain ATCC 204508 / S288c) (Baker's yeast).